The chain runs to 307 residues: Ribonuclease Z (307 aa).

Histidine 62, histidine 64, aspartate 66, histidine 67, histidine 139, aspartate 210, and histidine 268 together coordinate Zn(2+). Aspartate 66 (proton acceptor) is an active-site residue.

It belongs to the RNase Z family. Homodimer. The cofactor is Zn(2+).

The catalysed reaction is Endonucleolytic cleavage of RNA, removing extra 3' nucleotides from tRNA precursor, generating 3' termini of tRNAs. A 3'-hydroxy group is left at the tRNA terminus and a 5'-phosphoryl group is left at the trailer molecule.. Zinc phosphodiesterase, which displays some tRNA 3'-processing endonuclease activity. Probably involved in tRNA maturation, by removing a 3'-trailer from precursor tRNA. This Myxococcus xanthus (strain DK1622) protein is Ribonuclease Z.